Here is a 252-residue protein sequence, read N- to C-terminus: MQIKRWFLNNSLRNYQYLLYDKSHAIVIDPLKSDIFAEFIAKNKLQLEAILITHKHGDHIAGVKKLLAIYPNAKVYAYTGNDLFKPDIYVKDGSFINLGFTSFRVMYIPGHIDDHVCFLFEQERALFCGDTLFNAGVGGVQAESADINQLYDSLVKITKLDGDIKPYPAHDYWLGNLDFALSILADDSYFNYYRNQVAELAAEDKPIVNLAEEAKLNIFIRAMSDKALLKALPDYSLGREMFVKLRQLKNNF.

Zn(2+)-binding residues include His-54, His-56, Asp-58, His-59, His-111, Asp-130, and His-170.

Belongs to the metallo-beta-lactamase superfamily. Glyoxalase II family. Monomer. Zn(2+) is required as a cofactor.

The enzyme catalyses an S-(2-hydroxyacyl)glutathione + H2O = a 2-hydroxy carboxylate + glutathione + H(+). It participates in secondary metabolite metabolism; methylglyoxal degradation; (R)-lactate from methylglyoxal: step 2/2. Its function is as follows. Thiolesterase that catalyzes the hydrolysis of S-D-lactoyl-glutathione to form glutathione and D-lactic acid. This is Hydroxyacylglutathione hydrolase from Francisella tularensis subsp. holarctica (strain FTNF002-00 / FTA).